The primary structure comprises 102 residues: NADH-quinone oxidoreductase subunit K (102 aa).

Transmembrane regions (helical) follow at residues 5 to 25 (LGHFLSLGAMLFALSVIGIFL), 31 to 51 (IVLLMAIELMLLAVNMNFVAF), and 62 to 82 (IFVFFILTVAAAESAIGLALL).

Belongs to the complex I subunit 4L family. As to quaternary structure, NDH-1 is composed of 14 different subunits. Subunits NuoA, H, J, K, L, M, N constitute the membrane sector of the complex.

The protein resides in the cell inner membrane. The catalysed reaction is a quinone + NADH + 5 H(+)(in) = a quinol + NAD(+) + 4 H(+)(out). Functionally, NDH-1 shuttles electrons from NADH, via FMN and iron-sulfur (Fe-S) centers, to quinones in the respiratory chain. The immediate electron acceptor for the enzyme in this species is believed to be ubiquinone. Couples the redox reaction to proton translocation (for every two electrons transferred, four hydrogen ions are translocated across the cytoplasmic membrane), and thus conserves the redox energy in a proton gradient. This chain is NADH-quinone oxidoreductase subunit K, found in Variovorax paradoxus (strain S110).